The primary structure comprises 38 residues: Large ribosomal subunit protein bL36 (38 aa).

It belongs to the bacterial ribosomal protein bL36 family.

The polypeptide is Large ribosomal subunit protein bL36 (Synechococcus sp. (strain JA-2-3B'a(2-13)) (Cyanobacteria bacterium Yellowstone B-Prime)).